A 227-amino-acid polypeptide reads, in one-letter code: Cytochrome c oxidase subunit 2 (227 aa).

Topologically, residues 1–14 (MPYPMQLGFQDATS) are mitochondrial intermembrane. The chain crosses the membrane as a helical span at residues 15-45 (PIMEELTYFHDHTLMIVFLISSLVLYIIILM). Residues 46–59 (LTTKLTHTSTMDAQ) are Mitochondrial matrix-facing. The chain crosses the membrane as a helical span at residues 60-87 (EVETIWTILPAVILVLIALPSLRILYMM). Residues 88–227 (DEIYNPYLTI…YFEKWSSMMQ (140 aa)) are Mitochondrial intermembrane-facing. Cu cation contacts are provided by His-161, Cys-196, Glu-198, Cys-200, His-204, and Met-207. Position 198 (Glu-198) interacts with Mg(2+). Residue Tyr-218 is modified to Phosphotyrosine.

The protein belongs to the cytochrome c oxidase subunit 2 family. In terms of assembly, component of the cytochrome c oxidase (complex IV, CIV), a multisubunit enzyme composed of 14 subunits. The complex is composed of a catalytic core of 3 subunits MT-CO1, MT-CO2 and MT-CO3, encoded in the mitochondrial DNA, and 11 supernumerary subunits COX4I, COX5A, COX5B, COX6A, COX6B, COX6C, COX7A, COX7B, COX7C, COX8 and NDUFA4, which are encoded in the nuclear genome. The complex exists as a monomer or a dimer and forms supercomplexes (SCs) in the inner mitochondrial membrane with NADH-ubiquinone oxidoreductase (complex I, CI) and ubiquinol-cytochrome c oxidoreductase (cytochrome b-c1 complex, complex III, CIII), resulting in different assemblies (supercomplex SCI(1)III(2)IV(1) and megacomplex MCI(2)III(2)IV(2)). Found in a complex with TMEM177, COA6, COX18, COX20, SCO1 and SCO2. Interacts with TMEM177 in a COX20-dependent manner. Interacts with COX20. Interacts with COX16. The cofactor is Cu cation.

It localises to the mitochondrion inner membrane. The catalysed reaction is 4 Fe(II)-[cytochrome c] + O2 + 8 H(+)(in) = 4 Fe(III)-[cytochrome c] + 2 H2O + 4 H(+)(out). In terms of biological role, component of the cytochrome c oxidase, the last enzyme in the mitochondrial electron transport chain which drives oxidative phosphorylation. The respiratory chain contains 3 multisubunit complexes succinate dehydrogenase (complex II, CII), ubiquinol-cytochrome c oxidoreductase (cytochrome b-c1 complex, complex III, CIII) and cytochrome c oxidase (complex IV, CIV), that cooperate to transfer electrons derived from NADH and succinate to molecular oxygen, creating an electrochemical gradient over the inner membrane that drives transmembrane transport and the ATP synthase. Cytochrome c oxidase is the component of the respiratory chain that catalyzes the reduction of oxygen to water. Electrons originating from reduced cytochrome c in the intermembrane space (IMS) are transferred via the dinuclear copper A center (CU(A)) of subunit 2 and heme A of subunit 1 to the active site in subunit 1, a binuclear center (BNC) formed by heme A3 and copper B (CU(B)). The BNC reduces molecular oxygen to 2 water molecules using 4 electrons from cytochrome c in the IMS and 4 protons from the mitochondrial matrix. The polypeptide is Cytochrome c oxidase subunit 2 (MT-CO2) (Osphranter robustus (Wallaroo)).